The chain runs to 212 residues: 3,4-dihydroxy-2-butanone 4-phosphate synthase (212 aa).

D-ribulose 5-phosphate is bound by residues 37-38 (RE), aspartate 42, 150-154 (RRGHT), and glutamate 174. Glutamate 38 provides a ligand contact to Mg(2+). Histidine 153 lines the Mg(2+) pocket.

It belongs to the DHBP synthase family. In terms of assembly, homodimer. It depends on Mg(2+) as a cofactor. The cofactor is Mn(2+).

It carries out the reaction D-ribulose 5-phosphate = (2S)-2-hydroxy-3-oxobutyl phosphate + formate + H(+). It participates in cofactor biosynthesis; riboflavin biosynthesis; 2-hydroxy-3-oxobutyl phosphate from D-ribulose 5-phosphate: step 1/1. Its function is as follows. Catalyzes the conversion of D-ribulose 5-phosphate to formate and 3,4-dihydroxy-2-butanone 4-phosphate. This chain is 3,4-dihydroxy-2-butanone 4-phosphate synthase, found in Shewanella piezotolerans (strain WP3 / JCM 13877).